A 208-amino-acid chain; its full sequence is Imidazoleglycerol-phosphate dehydratase (208 aa).

The protein belongs to the imidazoleglycerol-phosphate dehydratase family.

Its subcellular location is the cytoplasm. It carries out the reaction D-erythro-1-(imidazol-4-yl)glycerol 3-phosphate = 3-(imidazol-4-yl)-2-oxopropyl phosphate + H2O. It participates in amino-acid biosynthesis; L-histidine biosynthesis; L-histidine from 5-phospho-alpha-D-ribose 1-diphosphate: step 6/9. The sequence is that of Imidazoleglycerol-phosphate dehydratase from Paenarthrobacter aurescens (strain TC1).